The chain runs to 94 residues: Large ribosomal subunit protein bL25 (94 aa).

The protein belongs to the bacterial ribosomal protein bL25 family. In terms of assembly, part of the 50S ribosomal subunit; part of the 5S rRNA/L5/L18/L25 subcomplex. Contacts the 5S rRNA. Binds to the 5S rRNA independently of L5 and L18.

In terms of biological role, this is one of the proteins that binds to the 5S RNA in the ribosome where it forms part of the central protuberance. The protein is Large ribosomal subunit protein bL25 of Escherichia coli (strain K12 / DH10B).